The sequence spans 348 residues: Spermidine/putrescine-binding periplasmic protein (348 aa).

The signal sequence occupies residues 1–23 (MKKWSRHLLAAGALALGMSAAHA). Spermidine contacts are provided by residues Glu36, Tyr85, 168–171 (DARE), and Gln327.

This sequence belongs to the bacterial solute-binding protein PotD/PotF family.

Its subcellular location is the periplasm. In terms of biological role, required for the activity of the bacterial periplasmic transport system of putrescine and spermidine. Polyamine binding protein. The protein is Spermidine/putrescine-binding periplasmic protein (potD) of Escherichia coli (strain K12).